Reading from the N-terminus, the 498-residue chain is Cyclin-L1 (498 aa).

Cyclin-like regions lie at residues glutamate 68–lysine 169 and lysine 182–lysine 266. Residues leucine 294–arginine 498 form a disordered region. The span at asparagine 311–serine 320 shows a compositional bias: polar residues. The span at serine 321–asparagine 341 shows a compositional bias: basic and acidic residues. Residues lysine 366–serine 396 form an RS region. A compositionally biased stretch (basic residues) spans asparagine 367–histidine 387. Low complexity predominate over residues serine 388 to arginine 402. Phosphoserine is present on residues serine 409 and serine 412. Over residues arginine 415–arginine 426 the composition is skewed to basic and acidic residues. Residues histidine 427–serine 440 are compositionally biased toward basic residues. A compositionally biased stretch (basic and acidic residues) spans asparagine 441–histidine 478. Basic residues predominate over residues glycine 479–arginine 498.

It belongs to the cyclin family. Cyclin L subfamily.

Its subcellular location is the nucleus speckle. The protein localises to the nucleus. It localises to the nucleoplasm. Functionally, involved in pre-mRNA splicing. The polypeptide is Cyclin-L1 (ccnl1) (Danio rerio (Zebrafish)).